A 389-amino-acid chain; its full sequence is Anhydro-N-acetylmuramic acid kinase (389 aa).

Residue 11 to 18 (GTSLDGVD) coordinates ATP.

The protein belongs to the anhydro-N-acetylmuramic acid kinase family.

It carries out the reaction 1,6-anhydro-N-acetyl-beta-muramate + ATP + H2O = N-acetyl-D-muramate 6-phosphate + ADP + H(+). It participates in amino-sugar metabolism; 1,6-anhydro-N-acetylmuramate degradation. It functions in the pathway cell wall biogenesis; peptidoglycan recycling. In terms of biological role, catalyzes the specific phosphorylation of 1,6-anhydro-N-acetylmuramic acid (anhMurNAc) with the simultaneous cleavage of the 1,6-anhydro ring, generating MurNAc-6-P. Is required for the utilization of anhMurNAc either imported from the medium or derived from its own cell wall murein, and thus plays a role in cell wall recycling. This Albidiferax ferrireducens (strain ATCC BAA-621 / DSM 15236 / T118) (Rhodoferax ferrireducens) protein is Anhydro-N-acetylmuramic acid kinase.